The primary structure comprises 449 residues: GTPase Der (449 aa).

EngA-type G domains lie at 3–167 (SIVA…PDEP) and 175–350 (TNIA…EQYS). Residues 9–16 (GRPNVGKS), 56–60 (DTGGF), 119–122 (NKVD), 181–188 (GRPNVGKS), 228–232 (DTAGI), and 293–296 (NKWD) each bind GTP. The KH-like domain occupies 351 to 435 (RRVTTSELNR…PFRLLFRGRE (85 aa)).

Belongs to the TRAFAC class TrmE-Era-EngA-EngB-Septin-like GTPase superfamily. EngA (Der) GTPase family. As to quaternary structure, associates with the 50S ribosomal subunit.

In terms of biological role, GTPase that plays an essential role in the late steps of ribosome biogenesis. This Trichlorobacter lovleyi (strain ATCC BAA-1151 / DSM 17278 / SZ) (Geobacter lovleyi) protein is GTPase Der.